The following is an 817-amino-acid chain: Disks large homolog 3 (817 aa).

N-acetylmethionine is present on residues Met1 and His2. The disordered stretch occupies residues 33-101 (WQVPDPYGPG…GKSTPKLNGS (69 aa)). Over residues 40–53 (GPGGGNGASAGYGG) the composition is skewed to gly residues. Residues 57–69 (QTLPSQAGATPTP) are compositionally biased toward polar residues. PDZ domains are found at residues 130–217 (EEIV…VRRR), 226–311 (EVNL…KVAK), and 379–465 (DFTR…VAQY). At Ser139 the chain carries Phosphoserine. The region spanning 501–571 (KRSLYVRALF…PSKKRVEKKE (71 aa)) is the SH3 domain. The Guanylate kinase-like domain occupies 627–802 (ARPVIILGPM…IYNKIKQIIE (176 aa)). Phosphotyrosine is present on Tyr673.

This sequence belongs to the MAGUK family. As to quaternary structure, interacts through its PDZ domains with NETO1, GRIN2B and SYNGAP1. Interacts through its guanylate kinase-like domain with DLGAP1, DLGAP2, DLGAP3 and DLGAP4. Interacts with FLTP/C1orf192. Interacts through its PDZ domains with APC. Interacts through its first two PDZ domains with ERBB4. Interacts through its third PDZ domain with NLGN1, and probably with NLGN2 and NLGN3. Interacts with FRMPD4 (via C-terminus). Interacts with LRFN1, LRFN2 and LRFN4. Interacts with DGKI (via PDZ-binding motif).

Its function is as follows. Required for learning most likely through its role in synaptic plasticity following NMDA receptor signaling. The chain is Disks large homolog 3 (DLG3) from Homo sapiens (Human).